A 124-amino-acid chain; its full sequence is Glutaredoxin-2 (124 aa).

C13 and C16 are joined by a disulfide.

This sequence belongs to the glutaredoxin family. As to quaternary structure, homodimer.

Its subcellular location is the host cytoplasm. Functionally, glutaredoxin necessary for virion morphogenesis and virus replication. Functions as a thiol-disulfide transfer protein between membrane-associated OPG128 and substrates OPG095 or OPG053. The complete pathway for formation of disulfide bonds in intracellular virion membrane proteins sequentially involves oxidation of OPG072, OPG128 and OPG088. Exhibit thioltransferase and dehydroascorbate reductase activities in vitro. This Mus musculus (Mouse) protein is Glutaredoxin-2 (OPG088).